The following is a 104-amino-acid chain: Thioredoxin-2 (104 aa).

One can recognise a Thioredoxin domain in the interval 2 to 104 (VTQLKSASEY…AIKQAIASNV (103 aa)). Active-site nucleophile residues include C31 and C34. A disulfide bridge links C31 with C34. Position 62 is a phosphoserine (S62). Residues K67 and K97 each participate in a glycyl lysine isopeptide (Lys-Gly) (interchain with G-Cter in ubiquitin) cross-link.

It belongs to the thioredoxin family. As to quaternary structure, monomer. Part of the heterodimeric LMA1 complex together with the proteinase inhibitor PBI2. LMA1 binds to the ATPase SEC18. Post-translationally, reversible disulfide bond formation between Cys-31 and Cys-34, reverted by thioredoxin reductase TRR1 using NADPH as hydrogen donor.

It localises to the cytoplasm. Its subcellular location is the golgi apparatus membrane. It is found in the nucleus. Participates as a hydrogen donor in redox reactions through the reversible oxidation of its active center dithiol to a disulfide, accompanied by the transfer of 2 electrons and 2 protons. It is involved in many cellular processes, including deoxyribonucleotide synthesis, repair of oxidatively damaged proteins, protein folding, sulfur metabolism, and redox homeostasis. Thioredoxin-dependent enzymes include phosphoadenosine-phosphosulfate reductase MET16, alkyl-hydroperoxide reductase DOT5, thioredoxin peroxidases TSA1 and TSA2, alkyl hydroperoxide reductase AHP1, and peroxiredoxin HYR1. Thioredoxin is also involved in protection against reducing stress. As part of the LMA1 complex, it is involved in the facilitation of vesicle fusion such as homotypic vacuole and ER-derived COPII vesicle fusion with the Golgi. This activity does not require the redox mechanism. Through its capacity to inactivate the stress response transcription factor YAP1 and its regulator the hydroperoxide stress sensor HYR1, it is involved in feedback regulation of stress response gene expression upon oxidative stress. The polypeptide is Thioredoxin-2 (TRX2) (Saccharomyces cerevisiae (strain ATCC 204508 / S288c) (Baker's yeast)).